The following is a 252-amino-acid chain: Neurotrophic factor BDNF precursor form (252 aa).

A signal peptide spans 1 to 18; sequence MTILFLTMVISYFGCMKA. Positions 19–133 are excised as a propeptide; the sequence is APMKEANVRG…AANMSMRVRR (115 aa). A disordered region spans residues 43-62; sequence LESVNGPKAGSRGLTSSSSS. Asn126 is a glycosylation site (N-linked (GlcNAc...) asparagine). Intrachain disulfides connect Cys146–Cys213, Cys191–Cys242, and Cys201–Cys244.

The protein belongs to the NGF-beta family. In terms of assembly, monomers and homodimers. Binds to NTRK2/TRKB. Can form heterodimers with other neurotrophin family members, such as NTF3 and NTF4 (in vitro), but the physiological relevance of this is not clear. BDNF precursor form: interacts with the heterodimer formed by NGFR and SORCS2. Mature BDNF has much lower affinity for the heterodimer formed by NGFR and SORCS2. N-glycosylated and glycosulfated, contrary to mature BDNF. Post-translationally, mature BDNF is produced by proteolytic removal of the propeptide, catalyzed by a FURIN family member. In addition, the precursor form is proteolytically cleaved within the propeptide, but this is not an obligatory intermediate for the production of mature BDNF. Can be converted into mature BDNF by plasmin (PLG). As to expression, brain and central nervous system.

The protein localises to the secreted. Important signaling molecule that activates signaling cascades downstream of NTRK2. During development, promotes the survival and differentiation of selected neuronal populations of the peripheral and central nervous systems. Participates in axonal growth, pathfinding and in the modulation of dendritic growth and morphology. Major regulator of synaptic transmission and plasticity at adult synapses in many regions of the CNS. The versatility of BDNF is emphasized by its contribution to a range of adaptive neuronal responses including long-term potentiation (LTP), long-term depression (LTD), certain forms of short-term synaptic plasticity, as well as homeostatic regulation of intrinsic neuronal excitability. Its function is as follows. Important signaling molecule that activates signaling cascades downstream of NTRK2. Activates signaling cascades via the heterodimeric receptor formed by NGFR and SORCS2. Signaling via NGFR and SORCS2 plays a role in synaptic plasticity and long-term depression (LTD). Binding to NGFR and SORCS2 promotes neuronal apoptosis. Promotes neuronal growth cone collapse. This chain is Neurotrophic factor BDNF precursor form (BDNF), found in Sus scrofa (Pig).